Reading from the N-terminus, the 118-residue chain is DNA-binding protein inhibitor ID-3-B (118 aa).

The bHLH domain maps to 32-84 (SLKGAGIDETMGLLYDMNGCYSKLKELVPGIPQGSKLSQVEILQHVIDYIFDL).

Homodimer. Heterodimer with other HLH proteins. Interacts (via HLH domain) with the bHLH protein hes4/hairy2 (via Orange domain). Interacts with stat3.

Its subcellular location is the nucleus. In terms of biological role, transcriptional regulator (lacking a basic DNA binding domain) which negatively regulates the basic helix-loop-helix (bHLH) transcription factors by forming heterodimers and inhibiting their DNA binding and transcriptional activity. Influences cell fate decisions in the embryo by sequestering and blocking the activity of the bHLH transcription factors that control these decisions. Inhibits the binding of myogenic bHLH-containing complexes to E-box DNA, thereby preventing activation of muscle-specific target genes. Also inhibits the activity of neurogenic factor neurod1/neuroD. Plays a role in cell cycle progression and survival of neural crest progenitors; binding to either hes4-B/hairy2b or stat3 blocks the formation of transcription factor complexes and the repressor function of hes4-B/hairy2B, to allow neural crest progenitors to differentiate. May play a role in the regulation of the circadian rhythm. In Xenopus laevis (African clawed frog), this protein is DNA-binding protein inhibitor ID-3-B (id3-b).